The following is a 776-amino-acid chain: MDSKESLTSPSEEIPSSVHGQERGNVMDFYKTRRGGATVKVFMPSPSLGGSSQSDSKQQRLLVDFPKGSVSNVQQPDLSKAVSLSMGLYMGETETKVMGNDLGFPQQGQITLSSGETNLQLLEESIANLNRSTSVPEHPKISASVAVSAALLKKELPETPSDVSSEQQNLKGQTGTNGGNVKLCTADQSTFDILQDLEFSSASPGRETNESPWRSDLLLDENCLLSPLAVEDDPFLSEGNLKEDCKPLILPDTKPKIKDNGDLILSSPKNVPLPQVKTEKEDFIELCTPGVIKQEKLGPVYCQANFSGANIIGNKMSAISVHGVSTSGGQMYHYDMNTATLSQQQDQKPIFNVIPPIPVSSENWNRCQGSGDENLTSLGTLNFSGRSVFSNGYSSPGMRPDVSSPPSNSLSAVGPPPKFCLVCSDEASGCHYGVLTCGSCKVFFKRAVEGQHNYLCAGRNDCIIDKIRRKNCPACRYRKCLQAGMNLEARKTKKKIKGIQQTTTGISQETPENSANKTIVPATLPQLTPTPVSLLEVIEPEVLYAGYDSSLPDTTWRIMSALNMLGGRQVIAAVKWAKAIPGFRNLHLDDQMTLLQYSWMFLMAFALGWRSYKQASANLLCFAPDLIINEQRMSLPFMYDQCKHMLFVSSELQRLQVSYEEYLCMKTLLLLSSVPKEGLKSQELFDEIRMTYIKELGKAIVKREGNSSQNWQRFYQLTKLLDSMHDVVENLLNYCFQTFLDKTMRIEFPEMLAEIITNQIPKYSSGNIKKLLFHQK.

A compositionally biased stretch (polar residues) spans 1 to 11; it reads MDSKESLTSPS. The tract at residues 1–25 is disordered; sequence MDSKESLTSPSEEIPSSVHGQERGN. The interval 1–419 is modulating; sequence MDSKESLTSP…LSAVGPPPKF (419 aa). T8 carries the post-translational modification Phosphothreonine. An Omega-N-methylarginine modification is found at R23. S45, S113, and S134 each carry phosphoserine. Residues 157–178 are disordered; sequence PETPSDVSSEQQNLKGQTGTNG. Residues 161–174 show a composition bias toward polar residues; that stretch reads SDVSSEQQNLKGQT. 3 positions are modified to phosphoserine: S203, S211, and S226. A Glycyl lysine isopeptide (Lys-Gly) (interchain with G-Cter in SUMO2) cross-link involves residue K258. S267 is modified (phosphoserine). Residues K277 and K293 each participate in a glycyl lysine isopeptide (Lys-Gly) (interchain with G-Cter in SUMO); alternate cross-link. Glycyl lysine isopeptide (Lys-Gly) (interchain with G-Cter in SUMO2); alternate cross-links involve residues K277 and K293. S307 and S404 each carry phosphoserine. Residues 417 to 492 constitute a DNA-binding region (nuclear receptor); that stretch reads PKFCLVCSDE…AGMNLEARKT (76 aa). Residue K418 forms a Glycyl lysine isopeptide (Lys-Gly) (interchain with G-Cter in ubiquitin) linkage. 2 NR C4-type zinc fingers span residues 420–440 and 456–480; these read CLVC…CGSC and CAGR…YRKC. An N6-acetyllysine mark is found at K479, K491, K493, and K494. The segment at 484-776 is interaction with CLOCK; it reads GMNLEARKTK…NIKKLLFHQK (293 aa). Residues 486–522 form a hinge region; the sequence is NLEARKTKKKIKGIQQTTTGISQETPENSANKTIVPA. Residues 523–757 form the NR LBD domain; that stretch reads TLPQLTPTPV…FPEMLAEIIT (235 aa). Positions 531 to 696 are interaction with CRY1; it reads PVSLLEVIEP…EIRMTYIKEL (166 aa). Residue K702 forms a Glycyl lysine isopeptide (Lys-Gly) (interchain with G-Cter in SUMO) linkage.

Belongs to the nuclear hormone receptor family. NR3 subfamily. In terms of assembly, heteromultimeric cytoplasmic complex with HSP90AA1, HSPA1A/HSPA1B, and FKBP5 or another immunophilin such as PPID, STIP1, or the immunophilin homolog PPP5C. Upon ligand binding FKBP5 dissociates from the complex and FKBP4 takes its place, thereby linking the complex to dynein and mediating transport to the nucleus, where the complex dissociates. Probably forms a complex composed of chaperones HSP90 and HSP70, co-chaperones CDC37, PPP5C, TSC1 and client protein TSC2, CDK4, AKT, RAF1 and NR3C1; this complex does not contain co-chaperones STIP1/HOP and PTGES3/p23. Directly interacts with UNC45A. Binds to DNA as a homodimer, and as heterodimer with NR3C2 or the retinoid X receptor. Binds STAT5A and STAT5B homodimers and heterodimers. Interacts with NRIP1, POU2F1, POU2F2 and TRIM28. Interacts with several coactivator complexes, including the SMARCA4 complex, CREBBP/EP300, TADA2L (Ada complex) and p160 coactivators such as NCOA2 and NCOA6. Interaction with BAG1 inhibits transactivation. Interacts with HEXIM1 and TGFB1I1. Interacts with NCOA1. Interacts with NCOA3, SMARCA4, SMARCC1, SMARCD1, and SMARCE1. Interacts with CLOCK, CRY1 and CRY2 in a ligand-dependent fashion. Interacts with CIART. Interacts with RWDD3. Interacts with UBE2I/UBC9 and this interaction is enhanced in the presence of RWDD3. Interacts with GRIP1. Interacts with NR4A3 (via nuclear receptor DNA-binding domain), represses transcription activity of NR4A3 on the POMC promoter Nur response element (NurRE). Directly interacts with PNRC2 to attract and form a complex with UPF1 and DCP1A; the interaction leads to rapid mRNA degradation. Interacts with GSK3B. Interacts with FNIP1 and FNIP2. Interacts (via C-terminus) with NR3C1 (via C-terminus). Interacts with MCM3AP. Interacts (via domain NR LBD) with HSP90AA1 and HSP90AB1. In the absence of hormonal ligand, interacts with TACC1. In terms of processing, acetylation by CLOCK reduces its binding to glucocorticoid response elements and its transcriptional activity. Increased proteasome-mediated degradation in response to glucocorticoids. Post-translationally, phosphorylated in the absence of hormone; becomes hyperphosphorylated in the presence of glucocorticoid. The Ser-203, Ser-226 and Ser-404-phosphorylated forms are mainly cytoplasmic, and the Ser-211-phosphorylated form is nuclear. Phosphorylation at Ser-211 increases transcriptional activity. Phosphorylation at Ser-203, Ser-226 and Ser-404 decreases signaling capacity. Phosphorylation at Ser-404 may protect from glucocorticoid-induced apoptosis. Phosphorylation at Ser-203 and Ser-211 is not required in regulation of chromosome segregation. May be dephosphorylated by PPP5C, attenuates NR3C1 action. In terms of processing, sumoylation at Lys-277 and Lys-293 negatively regulates its transcriptional activity. Sumoylation at Lys-702 positively regulates its transcriptional activity in the presence of RWDD3. Sumoylation at Lys-277 and Lys-293 is dispensable whereas sumoylation at Lys-702 is critical for the stimulatory effect of RWDD3 on its transcriptional activity. Heat shock increases sumoylation in a RWDD3-dependent manner. Ubiquitinated by UBR5, leading to its degradation: UBR5 specifically recognizes and binds ligand-bound NR3C1 when it is not associated with coactivators (NCOAs). In presence of NCOAs, the UBR5-degron is not accessible, preventing its ubiquitination and degradation.

It localises to the cytoplasm. Its subcellular location is the nucleus. The protein localises to the mitochondrion. The protein resides in the cytoskeleton. It is found in the spindle. It localises to the microtubule organizing center. Its subcellular location is the centrosome. The protein localises to the chromosome. The protein resides in the nucleoplasm. In terms of biological role, receptor for glucocorticoids (GC). Has a dual mode of action: as a transcription factor that binds to glucocorticoid response elements (GRE), both for nuclear and mitochondrial DNA, and as a modulator of other transcription factors. Affects inflammatory responses, cellular proliferation and differentiation in target tissues. Involved in chromatin remodeling. Plays a role in rapid mRNA degradation by binding to the 5' UTR of target mRNAs and interacting with PNRC2 in a ligand-dependent manner which recruits the RNA helicase UPF1 and the mRNA-decapping enzyme DCP1A, leading to RNA decay. Could act as a coactivator for STAT5-dependent transcription upon growth hormone (GH) stimulation and could reveal an essential role of hepatic GR in the control of body growth. Mediates glucocorticoid-induced apoptosis. Promotes accurate chromosome segregation during mitosis. May act as a tumor suppressor. May play a negative role in adipogenesis through the regulation of lipolytic and antilipogenic gene expression. In Tupaia belangeri (Common tree shrew), this protein is Glucocorticoid receptor (NR3C1).